A 1116-amino-acid polypeptide reads, in one-letter code: ELKS/Rab6-interacting/CAST family member 1 (1116 aa).

The interval 1 to 54 (MYGSARSVGKVEPSSQSPGRSPRLPRSPRLGHRRTNSTGGSSGSSVGGGSGKTL) is disordered. Position 10 is an N6-acetyllysine (Lys10). Residues 13 to 28 (PSSQSPGRSPRLPRSP) are compositionally biased toward low complexity. Phosphoserine is present on residues Ser17, Ser21, and Ser37. Thr38 carries the post-translational modification Phosphothreonine. The segment covering 40-51 (GSSGSSVGGGSG) has biased composition (gly residues). Phosphoserine is present on residues Ser55, Ser75, and Ser94. Positions 144–988 (RQARDNTIMD…RMKLMADNYE (845 aa)) form a coiled coil. A compositionally biased stretch (basic and acidic residues) spans 590-602 (KEKQMSSLKERVK). Disordered regions lie at residues 590-609 (KEKQ…ADTT) and 814-836 (ARRR…RKKD). A Phosphoserine modification is found at Ser1005. Thr1046 is subject to Phosphothreonine. The region spanning 1046 to 1108 (TPPASYNLDD…DHCPDILEQV (63 aa)) is the FIP-RBD domain. Residues 1060–1100 (WENELQKMTRGQLQDELEKGERDNAELQEFANAILQQIADH) are a coiled coil.

In terms of assembly, part of a complex with CHUK, IKBKB and IKBKG. Interacts with CHUK, IKBKB and IKBKG. The interaction with IKBKG is independent of CHUK and IKBKB. Interacts with NFKBIA. Isoform 4 interacts with PPFIA1, and through its C-terminus with the PDZ domains of RIMS1 and RIMS2. Interacts with ERC2/CAST1. Interacts with the GTB-bound forms of RAB6A isoform 1 and isoform 2 and with RAB6B. The interaction was strongest with RAB6B, followed by RAB6A isoform 2 and weakest with RAB6A isoform 1. Interacts with SDCCAG8. Part of a cortical microtubule stabilization complex (CMSC) composed of KANK1, PPFIA1, PPFIBP1, ERC1/ELKS, PHLDB2/LL5beta, CLASPs, KIF21A and possibly additional interactors; within CMSCs KANK1 and PHLDB2/LL5beta appear to be the core components for targeting of microtubule-binding proteins KIF21A and CLASPs, whereas PPFIA1, PPFIBP1 and ERC1/ELKS serve as scaffolds for protein clustering. Widely expressed. Isoform 2 and isoform 4 are abundantly expressed in brain. Isoform 1 and isoform 3 are predominantly expressed in testis and thyroid, and isoform 1 predominates in other tissues tested.

Its subcellular location is the cytoplasm. It is found in the cytoskeleton. The protein localises to the microtubule organizing center. It localises to the centrosome. The protein resides in the membrane. Its subcellular location is the golgi apparatus membrane. It is found in the presynaptic cell membrane. The protein localises to the cell projection. It localises to the podosome. Its function is as follows. Regulatory subunit of the IKK complex. Probably recruits IkappaBalpha/NFKBIA to the complex. May be involved in the organization of the cytomatrix at the nerve terminals active zone (CAZ) which regulates neurotransmitter release. May be involved in vesicle trafficking at the CAZ. May be involved in Rab-6 regulated endosomes to Golgi transport. The sequence is that of ELKS/Rab6-interacting/CAST family member 1 (ERC1) from Homo sapiens (Human).